Here is a 451-residue protein sequence, read N- to C-terminus: Glyceraldehyde-3-phosphate dehydrogenase B, chloroplastic (451 aa).

The transit peptide at 1–83 (MASHAALAPS…AAPVRGETVA (83 aa)) directs the protein to the chloroplast. NADP(+)-binding positions include 94 to 95 (RI), Asp-118, and Arg-163. Residues 237–239 (SCT), Thr-268, Arg-283, 296–297 (TG), and Arg-319 each bind D-glyceraldehyde 3-phosphate. Residue Cys-238 is the Nucleophile of the active site. An NADP(+)-binding site is contributed by Asn-402.

The protein belongs to the glyceraldehyde-3-phosphate dehydrogenase family. Tetramer of either four A chains (GAPDH 2) or two A and two B chains (GAPDH 1).

The protein localises to the plastid. Its subcellular location is the chloroplast. It carries out the reaction D-glyceraldehyde 3-phosphate + phosphate + NADP(+) = (2R)-3-phospho-glyceroyl phosphate + NADPH + H(+). It participates in carbohydrate biosynthesis; Calvin cycle. The sequence is that of Glyceraldehyde-3-phosphate dehydrogenase B, chloroplastic (GAPB) from Spinacia oleracea (Spinach).